Here is a 334-residue protein sequence, read N- to C-terminus: Heat-inducible transcription repressor HrcA (334 aa).

Belongs to the HrcA family.

In terms of biological role, negative regulator of class I heat shock genes (grpE-dnaK-dnaJ and groELS operons). Prevents heat-shock induction of these operons. This chain is Heat-inducible transcription repressor HrcA, found in Acidovorax ebreus (strain TPSY) (Diaphorobacter sp. (strain TPSY)).